Here is a 388-residue protein sequence, read N- to C-terminus: Xylose isomerase (388 aa).

Active-site residues include histidine 54 and aspartate 57. 7 residues coordinate Mg(2+): glutamate 181, glutamate 217, histidine 220, aspartate 245, aspartate 255, aspartate 257, and aspartate 287.

Belongs to the xylose isomerase family. In terms of assembly, homotetramer. Mg(2+) is required as a cofactor.

Its subcellular location is the cytoplasm. The catalysed reaction is alpha-D-xylose = alpha-D-xylulofuranose. The polypeptide is Xylose isomerase (Streptomyces olivaceoviridis (Streptomyces corchorusii)).